A 325-amino-acid chain; its full sequence is uncharacterized protein (325 aa).

The N-terminal 69 residues, 1 to 69 (MAMMTTTTTT…KNRRVSVTVS (69 aa)), are a transit peptide targeting the chloroplast. An N-acetylalanine modification is found at Ala70.

This sequence belongs to the NAD(P)-dependent epimerase/dehydratase family.

It localises to the plastid. The protein localises to the chloroplast. This is an uncharacterized protein from Arabidopsis thaliana (Mouse-ear cress).